A 272-amino-acid chain; its full sequence is Sordarin/hypoxysordarin biosynthesis cluster protein P (272 aa).

N-linked (GlcNAc...) asparagine glycosylation is found at N6 and N23. A run of 2 helical transmembrane segments spans residues 31 to 51 (FLASIWPYRHMMWIGPMLLFL) and 67 to 87 (AYHMPYSILALHVFISFVDLA). N208 is a glycosylation site (N-linked (GlcNAc...) asparagine).

It is found in the membrane. The protein operates within antibiotic biosynthesis. Its function is as follows. Part of the gene cluster that mediates the biosynthesis of sordarin and hypoxysordarin, glycoside antibiotics with a unique tetracyclic diterpene aglycone structure. First, the geranylgeranyl diphosphate synthase sdnC constructs GGDP from farnesyl diphosphate and isopentenyl diphosphate. The diterpene cyclase sdnA then catalyzes the cyclization of GGDP to afford cycloaraneosene. Cycloaraneosene is then hydroxylated four times by the putative cytochrome P450 monooxygenases sdnB, sdnE, sdnF and sdnH to give a hydroxylated cycloaraneosene derivative such as cycloaraneosene-8,9,13,19-tetraol. Although the order of the hydroxylations is unclear, at least C8, C9 and C13 of the cycloaraneosene skeleton are hydroxylated before the sordaricin formation. Dehydration of the 13-hydroxy group of the hydroxylated cycloaraneosene derivative might be catalyzed by an unassigned hypothetical protein such as sdnG and sdnP to construct the cyclopentadiene moiety. The FAD-dependent oxidoreductase sdnN is proposed to catalyze the oxidation at C9 of the hydroxylated cycloaraneosene derivative and also catalyze the Baeyer-Villiger oxidation to give the lactone intermediate. The presumed lactone intermediate would be hydrolyzed to give an acrolein moiety and a carboxylate moiety. Then, [4+2]cycloaddition would occur between the acrolein moiety and the cyclopentadiene moiety to give sordaricin. SdnN might also be involved in the [4+2]cycloaddition after the hypothesized oxidation to accommodate the oxidized product and prompt the [4+2]cycloaddition. GDP-6-deoxy-D-altrose may be biosynthesized from GDP-D-mannose by the putative GDP-mannose-4,6-dehydratase sdnI and the short-chain dehydrogenase sdnK. The glycosyltransferase sdnJ catalyzes the attachment of 6-deoxy-D-altrose onto the 19-hydroxy group of sordaricin to give 4'-O-demethylsordarin. The methyltransferase sdnD would complete the biosynthesis of sordarin. Sordarin can be further modified into hypoxysordarin. The unique acyl chain at the 3'-hydroxy group of hypoxysordarin would be constructed by an iterative type I PKS sdnO and the trans-acting polyketide methyltransferase sdnL. SdnL would be responsible for the introduction of an alpha-methyl group of the polyketide chain. Alternatively, the beta-lactamase-like protein sdnR might be responsible for the cleavage and transfer of the polyketide chain from the PKS sdnO to sordarin. Two putative cytochrome P450 monooxygenases, sdnQ and sdnT, might catalyze the epoxidations of the polyketide chain to complete the biosynthesis of hypoxysordarin. Transcriptional regulators sdnM and sdnS are presumably encoded for the transcriptional regulation of the expression of the sdn gene cluster. This chain is Sordarin/hypoxysordarin biosynthesis cluster protein P, found in Sordaria araneosa (Pleurage araneosa).